The following is a 400-amino-acid chain: Cytochrome P450 BJ-1 homolog (400 aa).

C349 contributes to the heme binding site.

This sequence belongs to the cytochrome P450 family. Heme serves as cofactor.

In terms of biological role, cytochromes P450 are a group of heme-thiolate monooxygenases. They oxidize a variety of structurally unrelated compounds, including steroids, fatty acids, and xenobiotics. The sequence is that of Cytochrome P450 BJ-1 homolog (cyp112A2) from Sinorhizobium fredii (strain NBRC 101917 / NGR234).